Here is a 96-residue protein sequence, read N- to C-terminus: Neutrophil defensin 1 (96 aa).

The first 19 residues, 1-19, serve as a signal peptide directing secretion; that stretch reads MRTLVILAAILLVALQAQA. Residues 20-66 constitute a propeptide that is removed on maturation; the sequence is EPLQARTDEATAAQEQIPTDNPEVVVSLAWDESLAPKDSVPGLRKNM. 3 disulfide bridges follow: Cys-68/Cys-96, Cys-70/Cys-85, and Cys-75/Cys-95. Tyr-87 carries the post-translational modification Phosphotyrosine.

As to quaternary structure, tetramer. Dimer. Interacts with RETN. ADP-ribosylation drastically reduces cytotoxic and antibacterial activities, and enhances IL8 production.

Its subcellular location is the secreted. Functionally, effector molecule of the innate immune system that acts via antibiotic-like properties against a broad array of infectious agents including bacteria, fungi, and viruses or by promoting the activation and maturation of some APCs. Interacts with the essential precursor of cell wall synthesis lipid II to inhibit bacterial cell wall synthesis. Inhibits adenovirus infection via inhibition of viral disassembly at the vertex region, thereby restricting the release of internal capsid protein pVI, which is required for endosomal membrane penetration during cell entry. In addition, interaction with adenovirus capsid leads to the redirection of viral particles to TLR4 thereby promoting a NLRP3-mediated inflammasome response and interleukin 1-beta (IL-1beta) release. Induces the production of proinflammatory cytokines including type I interferon (IFN) in plasmacytoid dendritic cells (pDCs) by triggering the degradation of NFKBIA and nuclear translocation of IRF1, both of which are required for activation of pDCs. In Macaca mulatta (Rhesus macaque), this protein is Neutrophil defensin 1.